A 331-amino-acid chain; its full sequence is UDP-GalNAc:beta-1,3-N-acetylgalactosaminyltransferase 1 (331 aa).

At 1–20 the chain is on the cytoplasmic side; sequence MAPALPITLPSKMSLRSLKW. A helical; Signal-anchor for type II membrane protein transmembrane segment spans residues 21-43; the sequence is SLLLLSLLSFLVMWYLSLPHYNV. The Lumenal segment spans residues 44–331; that stretch reads IERVNWMYFY…VMLRNTTCHY (288 aa). Residues asparagine 72, asparagine 154, asparagine 198, asparagine 212, and asparagine 326 are each glycosylated (N-linked (GlcNAc...) asparagine).

Belongs to the glycosyltransferase 31 family. Mg(2+) is required as a cofactor.

It is found in the golgi apparatus membrane. The enzyme catalyses a globoside Gb3Cer (d18:1(4E)) + UDP-N-acetyl-alpha-D-galactosamine = a globoside Gb4Cer (d18:1(4E)) + UDP + H(+). The protein operates within protein modification; protein glycosylation. Transfers N-acetylgalactosamine onto globotriaosylceramide. Plays a critical role in preimplantation stage embryonic development. This is UDP-GalNAc:beta-1,3-N-acetylgalactosaminyltransferase 1 (B3GALNT1) from Sus scrofa (Pig).